A 282-amino-acid chain; its full sequence is Probable endonuclease 4 (282 aa).

Residues histidine 69, histidine 109, glutamate 145, aspartate 179, histidine 182, histidine 216, aspartate 229, histidine 231, and glutamate 261 each coordinate Zn(2+).

The protein belongs to the AP endonuclease 2 family. It depends on Zn(2+) as a cofactor.

It carries out the reaction Endonucleolytic cleavage to 5'-phosphooligonucleotide end-products.. Functionally, endonuclease IV plays a role in DNA repair. It cleaves phosphodiester bonds at apurinic or apyrimidinic (AP) sites, generating a 3'-hydroxyl group and a 5'-terminal sugar phosphate. This is Probable endonuclease 4 from Campylobacter hominis (strain ATCC BAA-381 / DSM 21671 / CCUG 45161 / LMG 19568 / NCTC 13146 / CH001A).